Here is a 413-residue protein sequence, read N- to C-terminus: Arginine biosynthesis bifunctional protein ArgJ, mitochondrial (413 aa).

Substrate-binding residues include Thr-168, Lys-194, Thr-205, and Glu-292. Thr-205 functions as the Nucleophile in the catalytic mechanism.

The protein belongs to the ArgJ family. Heterodimer of an alpha and a beta chain. Post-translationally, the alpha and beta chains are autoproteolytically processed from a single precursor protein within the mitochondrion.

It is found in the mitochondrion matrix. It carries out the reaction N(2)-acetyl-L-ornithine + L-glutamate = N-acetyl-L-glutamate + L-ornithine. The enzyme catalyses L-glutamate + acetyl-CoA = N-acetyl-L-glutamate + CoA + H(+). Its pathway is amino-acid biosynthesis; L-arginine biosynthesis; L-ornithine and N-acetyl-L-glutamate from L-glutamate and N(2)-acetyl-L-ornithine (cyclic): step 1/1. It participates in amino-acid biosynthesis; L-arginine biosynthesis; N(2)-acetyl-L-ornithine from L-glutamate: step 1/4. Catalyzes two activities which are involved in the cyclic version of arginine biosynthesis: the synthesis of acetylglutamate from glutamate and acetyl-CoA, and of ornithine by transacetylation between acetylornithine and glutamate. The sequence is that of Arginine biosynthesis bifunctional protein ArgJ, mitochondrial from Clavispora lusitaniae (strain ATCC 42720) (Yeast).